Reading from the N-terminus, the 498-residue chain is ATP synthase subunit beta, chloroplastic (498 aa).

Glycine 172–threonine 179 is a binding site for ATP.

Belongs to the ATPase alpha/beta chains family. F-type ATPases have 2 components, CF(1) - the catalytic core - and CF(0) - the membrane proton channel. CF(1) has five subunits: alpha(3), beta(3), gamma(1), delta(1), epsilon(1). CF(0) has four main subunits: a(1), b(1), b'(1) and c(9-12).

It is found in the plastid. It localises to the chloroplast thylakoid membrane. The catalysed reaction is ATP + H2O + 4 H(+)(in) = ADP + phosphate + 5 H(+)(out). Produces ATP from ADP in the presence of a proton gradient across the membrane. The catalytic sites are hosted primarily by the beta subunits. The polypeptide is ATP synthase subunit beta, chloroplastic (Schisandra sphenanthera (Southern magnolia vine)).